The sequence spans 293 residues: Kynurenine formamidase (293 aa).

The short motif at His84–Trp88 is the HGGXW element. Residue Ser153 is the Nucleophile of the active site. Residues Asp236 and His268 contribute to the active site.

The protein belongs to the kynurenine formamidase family. Homodimer.

It is found in the cytoplasm. It localises to the cytosol. The protein resides in the nucleus. The enzyme catalyses N-formyl-L-kynurenine + H2O = L-kynurenine + formate + H(+). The protein operates within amino-acid degradation; L-tryptophan degradation via kynurenine pathway; L-kynurenine from L-tryptophan: step 2/2. Catalyzes the hydrolysis of N-formyl-L-kynurenine to L-kynurenine, the second step in the kynurenine pathway of tryptophan degradation. Kynurenine may be further oxidized to nicotinic acid, NAD(H) and NADP(H). Required for elimination of toxic metabolites. This chain is Kynurenine formamidase (afmid), found in Danio rerio (Zebrafish).